A 1152-amino-acid polypeptide reads, in one-letter code: ATP-dependent helicase/deoxyribonuclease subunit B (1152 aa).

The UvrD-like helicase ATP-binding domain occupies 1–338 (MSIRFIYGRA…LVRDRNYRFR (338 aa)). ATP is bound at residue 8–15 (GRAGSGKS). Residues 276–579 (PYRFKNSEEL…NVGDIARIKG (304 aa)) form the UvrD-like helicase C-terminal domain. [4Fe-4S] cluster contacts are provided by C785, C1106, C1109, and C1115.

This sequence belongs to the helicase family. AddB/RexB type 1 subfamily. As to quaternary structure, heterodimer of AddA and AddB. Mg(2+) is required as a cofactor. [4Fe-4S] cluster serves as cofactor.

In terms of biological role, the heterodimer acts as both an ATP-dependent DNA helicase and an ATP-dependent, dual-direction single-stranded exonuclease. Recognizes the chi site generating a DNA molecule suitable for the initiation of homologous recombination. The AddB subunit has 5' -&gt; 3' nuclease activity but not helicase activity. This chain is ATP-dependent helicase/deoxyribonuclease subunit B, found in Clostridium botulinum (strain Alaska E43 / Type E3).